We begin with the raw amino-acid sequence, 658 residues long: Putative arrestin-related trafficking adapter C2D10.04 (658 aa).

Disordered stretches follow at residues 21–107 (LHHQ…LTWS) and 638–658 (REEAPHRSLSRTVSRSFEIPR). Residues 39–81 (NRSSNSGLNRRNSVFGLPSSGLSSRLSKPSLSSINNSNNSSSN) are compositionally biased toward low complexity. Over residues 96–107 (RNMSNKPPLTWS) the composition is skewed to polar residues. The residue at position 653 (Ser-653) is a Phosphoserine.

The protein belongs to the ALY1 family.

The protein localises to the cytoplasm. Its function is as follows. May regulate endocytosis in response to extracellular stimuli. In Schizosaccharomyces pombe (strain 972 / ATCC 24843) (Fission yeast), this protein is Putative arrestin-related trafficking adapter C2D10.04.